Reading from the N-terminus, the 396-residue chain is RNA polymerase principal sigma factor HrdA (396 aa).

Basic residues predominate over residues 1–20; that stretch reads MRGGQRRASRLRPPTYRRRP. Positions 1–96 are disordered; that stretch reads MRGGQRRASR…PTRTESGGPS (96 aa). 2 stretches are compositionally biased toward low complexity: residues 33 to 42 and 56 to 75; these read QTQTLTQTDT and LLAMPAQPGAGAALPHPGAP. The short motif at 187–200 is the Polymerase core binding element; that stretch reads DLVQEGNLGLIRAV. The H-T-H motif DNA-binding region spans 357–376; the sequence is LEEIGRLFGVTRERIRQIES.

The protein belongs to the sigma-70 factor family. In terms of assembly, interacts transiently with the RNA polymerase catalytic core. Interacts with RNA polymerase-binding protein RbpA.

In terms of biological role, sigma factors are initiation factors that promote the attachment of RNA polymerase to specific initiation sites and are then released. The sequence is that of RNA polymerase principal sigma factor HrdA (hrdA) from Streptomyces coelicolor (strain ATCC BAA-471 / A3(2) / M145).